Here is a 396-residue protein sequence, read N- to C-terminus: Actin-related protein 6 (396 aa).

The residue at position 2 (T2) is an N-acetylthreonine. K260 bears the N6-acetyllysine mark.

This sequence belongs to the actin family. ARP6 subfamily. Component of the chromatin-remodeling SRCAP complex composed of at least SRCAP, DMAP1, RUVBL1, RUVBL2, ACTL6A, YEATS4, ACTR6 and ZNHIT1. Interacts with CBX1, CBX3 and CBX5.

Its subcellular location is the cytoplasm. The protein resides in the cytoskeleton. It is found in the nucleus. It localises to the nucleolus. Its function is as follows. Required for formation and/or maintenance of proper nucleolar structure and function. Plays a dual role in the regulation of ribosomal DNA (rDNA) transcription. In the presence of high glucose, maintains active rDNA transcription through H2A.Z deposition and under glucose starvation, is required for the repression of rDNA transcription, and this function may be independent of H2A.Z. The polypeptide is Actin-related protein 6 (Actr6) (Mus musculus (Mouse)).